The following is a 238-amino-acid chain: Single-stranded DNA-binding protein WHY2, mitochondrial (238 aa).

A mitochondrion-targeting transit peptide spans 1 to 29; it reads MMKQARSLLSRSLCDQSKSLFEASTLRGF. The required for ssDNA binding stretch occupies residues 62-67; sequence KGKAAL.

Belongs to the Whirly family. As to quaternary structure, homotetramer.

It localises to the mitochondrion. Single-stranded DNA-binding protein that associates with mitochondrial DNA and may play a role in the regulation of the gene expression machinery. Also seems to be required to prevent break-induced DNA rearrangements in the mitochondrial genome. Can bind to melt double-stranded DNA in vivo. This chain is Single-stranded DNA-binding protein WHY2, mitochondrial (WHY2), found in Arabidopsis thaliana (Mouse-ear cress).